Consider the following 360-residue polypeptide: 3-dehydroquinate synthase (360 aa).

NAD(+) is bound by residues 71-76 (DGEQYK), 105-109 (GVVGD), 129-130 (TT), lysine 142, lysine 151, and 169-172 (TLNT). Residues glutamate 184, histidine 248, and histidine 265 each contribute to the Zn(2+) site.

This sequence belongs to the sugar phosphate cyclases superfamily. Dehydroquinate synthase family. Co(2+) is required as a cofactor. It depends on Zn(2+) as a cofactor. The cofactor is NAD(+).

The protein resides in the cytoplasm. It catalyses the reaction 7-phospho-2-dehydro-3-deoxy-D-arabino-heptonate = 3-dehydroquinate + phosphate. The protein operates within metabolic intermediate biosynthesis; chorismate biosynthesis; chorismate from D-erythrose 4-phosphate and phosphoenolpyruvate: step 2/7. Its function is as follows. Catalyzes the conversion of 3-deoxy-D-arabino-heptulosonate 7-phosphate (DAHP) to dehydroquinate (DHQ). This is 3-dehydroquinate synthase from Coxiella burnetii (strain CbuG_Q212) (Coxiella burnetii (strain Q212)).